The primary structure comprises 193 residues: Xanthine phosphoribosyltransferase (193 aa).

2 residues coordinate xanthine: Leu-20 and Thr-27. 128-132 (ANGQA) is a 5-phospho-alpha-D-ribose 1-diphosphate binding site. Lys-156 contributes to the xanthine binding site.

It belongs to the purine/pyrimidine phosphoribosyltransferase family. Xpt subfamily. As to quaternary structure, homodimer.

The protein localises to the cytoplasm. The catalysed reaction is XMP + diphosphate = xanthine + 5-phospho-alpha-D-ribose 1-diphosphate. It functions in the pathway purine metabolism; XMP biosynthesis via salvage pathway; XMP from xanthine: step 1/1. Functionally, converts the preformed base xanthine, a product of nucleic acid breakdown, to xanthosine 5'-monophosphate (XMP), so it can be reused for RNA or DNA synthesis. The chain is Xanthine phosphoribosyltransferase from Streptococcus pneumoniae serotype 19F (strain G54).